Consider the following 549-residue polypeptide: MTKFVFVTGGVVSSLGKGIAAASLAAILESRGLKVTLLKLDPYINVDPGTMSPFQHGEVFVTEDGAETDLDLGHYERFVSAKMRKSNNFTTGQIYESVIRKERRGEYLGKTVQVIPHITNEIQAFVERGAAASHDGKADVALVEIGGTVGDIESLPFLEAARQMSLRLGRNHCAFVHLTLVPFIASAGELKTKPTQHSVQKLREIGISPTALLCRADRPIPDDERAKISLFANIPQEAVISVWDADSIYKIPQMLNEQGLDRLICEELRLDPKPADLSMWQKLVKAQENPEHEITIGMVGKYVDLTESYKSLIEALRHAGMHTATRVNIEYIDSEELESGHLEVLQPLDAILVPGGFGKRGTEGKIRAIQYARENKVPYLGICLGMQLAVIEFARHVASMGDANSTEFNLDTEHPVVALITEWVDRDGKVEQRSADSDLGGTMRLGAQRVPIKTGTKASQIYGAEVNERHRHRYEVNNHYVPELEKAGMVISARTPTENLPEMMELPESMHPWFVGVQFHPEFTSTPRDGHPLFKAYVEAALAAQRQGA.

The interval 1–270 (MTKFVFVTGG…DRLICEELRL (270 aa)) is amidoligase domain. CTP is bound at residue S13. UTP is bound at residue S13. ATP-binding positions include 14–19 (SLGKGI) and D71. 2 residues coordinate Mg(2+): D71 and E144. Residues 151–153 (DIE), 191–196 (KTKPTQ), and K227 contribute to the CTP site. UTP is bound by residues 191 to 196 (KTKPTQ) and K227. One can recognise a Glutamine amidotransferase type-1 domain in the interval 295–547 (TIGMVGKYVD…VEAALAAQRQ (253 aa)). G356 serves as a coordination point for L-glutamine. Catalysis depends on C383, which acts as the Nucleophile; for glutamine hydrolysis. Residues 384 to 387 (LGMQ), E407, and R473 contribute to the L-glutamine site. Catalysis depends on residues H520 and E522.

The protein belongs to the CTP synthase family. As to quaternary structure, homotetramer.

It catalyses the reaction UTP + L-glutamine + ATP + H2O = CTP + L-glutamate + ADP + phosphate + 2 H(+). The enzyme catalyses L-glutamine + H2O = L-glutamate + NH4(+). It carries out the reaction UTP + NH4(+) + ATP = CTP + ADP + phosphate + 2 H(+). Its pathway is pyrimidine metabolism; CTP biosynthesis via de novo pathway; CTP from UDP: step 2/2. Allosterically activated by GTP, when glutamine is the substrate; GTP has no effect on the reaction when ammonia is the substrate. The allosteric effector GTP functions by stabilizing the protein conformation that binds the tetrahedral intermediate(s) formed during glutamine hydrolysis. Inhibited by the product CTP, via allosteric rather than competitive inhibition. Catalyzes the ATP-dependent amination of UTP to CTP with either L-glutamine or ammonia as the source of nitrogen. Regulates intracellular CTP levels through interactions with the four ribonucleotide triphosphates. The sequence is that of CTP synthase from Cupriavidus metallidurans (strain ATCC 43123 / DSM 2839 / NBRC 102507 / CH34) (Ralstonia metallidurans).